Here is a 259-residue protein sequence, read N- to C-terminus: Synaptophysin-like protein 1 (259 aa).

Topologically, residues 1 to 33 are cytoplasmic; that stretch reads MAPNIYLVRQRISRLGQRMSGFQINLNPLKEPL. The 210-residue stretch at 28-237 folds into the MARVEL domain; sequence PLKEPLGFIK…NAWFVYKETS (210 aa). Residues 34-54 traverse the membrane as a helical segment; sequence GFIKVLEWIASIFAFATCGGF. At 55–116 the chain is on the vesicular side; the sequence is KGQTEIQVNC…LIGDYSSSAQ (62 aa). The N-linked (GlcNAc...) asparagine glycan is linked to Asn71. A helical membrane pass occupies residues 117 to 137; sequence FYVTFAVFVFLYCIAALLLYV. Over 138 to 150 the chain is Cytoplasmic; the sequence is GYTSLYLDSRKLP. The chain crosses the membrane as a helical span at residues 151–171; sequence MIDFVVTLVATFLWLVSTSAW. Over 172 to 212 the chain is Vesicular; that stretch reads AKALTDIKIATGHNIIDELPPCKKKAVLCYFGSVTSMGSLN. A glycan (N-linked (GlcNAc...) asparagine) is linked at Asn212. A helical transmembrane segment spans residues 213–233; that stretch reads VSVIFGFLNMILWGGNAWFVY. The Cytoplasmic portion of the chain corresponds to 234–259; that stretch reads KETSLHSPSNTSAPHSQGGIPPPTGI.

It belongs to the synaptophysin/synaptobrevin family.

It localises to the cytoplasmic vesicle membrane. It is found in the melanosome. The protein is Synaptophysin-like protein 1 (SYPL1) of Homo sapiens (Human).